The following is a 464-amino-acid chain: 3-isopropylmalate dehydratase large subunit (464 aa).

3 residues coordinate [4Fe-4S] cluster: C337, C397, and C400.

It belongs to the aconitase/IPM isomerase family. LeuC type 1 subfamily. In terms of assembly, heterodimer of LeuC and LeuD. [4Fe-4S] cluster serves as cofactor.

It catalyses the reaction (2R,3S)-3-isopropylmalate = (2S)-2-isopropylmalate. Its pathway is amino-acid biosynthesis; L-leucine biosynthesis; L-leucine from 3-methyl-2-oxobutanoate: step 2/4. Catalyzes the isomerization between 2-isopropylmalate and 3-isopropylmalate, via the formation of 2-isopropylmaleate. This is 3-isopropylmalate dehydratase large subunit from Bacillus mycoides (strain KBAB4) (Bacillus weihenstephanensis).